A 102-amino-acid polypeptide reads, in one-letter code: UPF0235 protein msl4154 (102 aa).

It belongs to the UPF0235 family.

The sequence is that of UPF0235 protein msl4154 from Mesorhizobium japonicum (strain LMG 29417 / CECT 9101 / MAFF 303099) (Mesorhizobium loti (strain MAFF 303099)).